Reading from the N-terminus, the 89-residue chain is Acylphosphatase (89 aa).

The Acylphosphatase-like domain occupies 3-89; it reads CKRWILYGRV…GNYGSFHIEY (87 aa). Active-site residues include arginine 18 and asparagine 36.

It belongs to the acylphosphatase family.

It carries out the reaction an acyl phosphate + H2O = a carboxylate + phosphate + H(+). This is Acylphosphatase (acyP) from Petrotoga mobilis (strain DSM 10674 / SJ95).